The sequence spans 232 residues: Ribose-5-phosphate isomerase A (232 aa).

Substrate is bound by residues 28 to 31, 83 to 86, and 96 to 99; these read TGST, DGAD, and KGGG. The Proton acceptor role is filled by E105. K123 is a substrate binding site.

The protein belongs to the ribose 5-phosphate isomerase family. As to quaternary structure, homodimer.

The enzyme catalyses aldehydo-D-ribose 5-phosphate = D-ribulose 5-phosphate. The protein operates within carbohydrate degradation; pentose phosphate pathway; D-ribose 5-phosphate from D-ribulose 5-phosphate (non-oxidative stage): step 1/1. Its function is as follows. Catalyzes the reversible conversion of ribose-5-phosphate to ribulose 5-phosphate. This Allorhizobium ampelinum (strain ATCC BAA-846 / DSM 112012 / S4) (Agrobacterium vitis (strain S4)) protein is Ribose-5-phosphate isomerase A.